A 515-amino-acid polypeptide reads, in one-letter code: Maturase K (515 aa).

The protein belongs to the intron maturase 2 family. MatK subfamily.

It localises to the plastid. The protein resides in the chloroplast. Functionally, usually encoded in the trnK tRNA gene intron. Probably assists in splicing its own and other chloroplast group II introns. In Pinus yunnanensis (Yunnan pine), this protein is Maturase K.